Consider the following 208-residue polypeptide: Small ribosomal subunit protein uS4 (208 aa).

The S4 RNA-binding domain occupies 98–160 (SRLDNVAYNM…AKSYLRIKSS (63 aa)).

Belongs to the universal ribosomal protein uS4 family. In terms of assembly, part of the 30S ribosomal subunit. Contacts protein S5. The interaction surface between S4 and S5 is involved in control of translational fidelity.

In terms of biological role, one of the primary rRNA binding proteins, it binds directly to 16S rRNA where it nucleates assembly of the body of the 30S subunit. Its function is as follows. With S5 and S12 plays an important role in translational accuracy. This chain is Small ribosomal subunit protein uS4, found in Nitrosomonas eutropha (strain DSM 101675 / C91 / Nm57).